A 466-amino-acid polypeptide reads, in one-letter code: MAALSNLKQCPPFSTLPDLALRHNHIPELERYPQINLNSELLANPAGQRYYGGQSFVSVNEGVLKRIARSFFNGGFWKTLEEARSPETREQAPLIAQAGDLIAQFLGLATGLRILPHTQQLSAERIAQFVETRDWLNSDVRYLAWNQHFFCLAVAGVDDVVRIYTKSSSATTATVLKSPSQTQITCMAWRPLCASEIVIGCRQGLCFWEVDSTLHLGRTNAPSEIFKYPNNLPITSMQWNKDGTQLATASIGDRSIIIWQPDTGMMQPLKRLGPPGSLLKWSPDNDWLFAATVDRVFRVWNCHQQWTTERWVCGPGGYVQTACWSPCGRFLLFVSSAEPILYRLQFVQQSLLSSSADEKEILPIADLNACSIDANRTLVGGPAQQLAWDPHGNYLVVTFKATNCIAVFRTFIQKFDLQISAAYYLSGETAAEHPSFICFQPLYEDNDRSVLTIAWSSGRIQYYAFD.

WD repeat units lie at residues tryptophan 135–threonine 174, proline 179–arginine 218, proline 229–leucine 269, arginine 271–arginine 310, and leucine 378–glutamine 418.

The protein localises to the nucleus. Its subcellular location is the nuclear pore complex. It localises to the cytoplasm. It is found in the cytoskeleton. The protein resides in the spindle. Functionally, involved in mitotic spindle assembly. This chain is Aladin, found in Drosophila melanogaster (Fruit fly).